The chain runs to 337 residues: Phenylalanine--tRNA ligase alpha subunit (337 aa).

Residue Glu-252 participates in Mg(2+) binding.

Belongs to the class-II aminoacyl-tRNA synthetase family. Phe-tRNA synthetase alpha subunit type 1 subfamily. In terms of assembly, tetramer of two alpha and two beta subunits. Mg(2+) is required as a cofactor.

It is found in the cytoplasm. The enzyme catalyses tRNA(Phe) + L-phenylalanine + ATP = L-phenylalanyl-tRNA(Phe) + AMP + diphosphate + H(+). In Francisella tularensis subsp. mediasiatica (strain FSC147), this protein is Phenylalanine--tRNA ligase alpha subunit.